The following is a 557-amino-acid chain: Protein PNS1 (557 aa).

Positions 1-58 (MSTEKQYQPQQPPPAYTGQGPDNGNAYGYPESYGKTETHSGDSCSGDTSMNPQQQGQQ) are disordered. Residues 1–99 (MSTEKQYQPQ…DNNKPKFNDW (99 aa)) lie on the Cytoplasmic side of the membrane. Residues 41-58 (GDSCSGDTSMNPQQQGQQ) show a composition bias toward polar residues. A helical transmembrane segment spans residues 100–120 (PFIIVFLLTLCGFIVVASLTL). The Extracellular segment spans residues 121–147 (RAWSQTYSSTGSGIYHDFDTGTLNTNS). The chain crosses the membrane as a helical span at residues 148-168 (VILLVFSVVIAIFFAFIGIVL). The Cytoplasmic segment spans residues 169–174 (CRAYPK). Residues 175-195 (FFIYAGMIVNILAALGTAIMY) traverse the membrane as a helical segment. Residues 196-200 (MSLKY) are Extracellular-facing. The helical transmembrane segment at 201-221 (WSAGIVFLIFTFMTAWCYWGM) threads the bilayer. Over 222-246 (RSRIPLTVAILRVIVLAMKNCPQSL) the chain is Cytoplasmic. Residues 247 to 267 (FVSFFGTIVASAFAMLFSTVV) form a helical membrane-spanning segment. The Extracellular segment spans residues 268 to 292 (VATYMKYDPSNTNSGCNVSGGDCSH). N-linked (GlcNAc...) asparagine glycosylation is present at Asn-284. A helical membrane pass occupies residues 293–313 (AKLIGVLVVVFFCGYYISEVI). Topologically, residues 314–350 (RNVMHCTVSGVFGSWYYRYKSDQGMPKWPAMGAFKRA) are cytoplasmic. A helical membrane pass occupies residues 351–371 (MTYSFGSICFGSLIVSIIETF). The Extracellular segment spans residues 372-393 (RQLLQLGKQAAIASTDNANWIR). A helical transmembrane segment spans residues 394–414 (IIFWLIDMLVGFIQWIAQYFN). The Cytoplasmic segment spans residues 415 to 454 (HYAYCIIALYGKPYLKAAKQTWYMFREKGIDALINDNLVN). The helical transmembrane segment at 455–475 (VALGFYSLFASYMSCLFAFLY) threads the bilayer. At 476–488 (LRFTKPGYNSDGD) the chain is on the extracellular side. The chain crosses the membrane as a helical span at residues 489–509 (FNAPLMAFAFVIALQLTNIAN). Topologically, residues 510 to 557 (ETIRSGCATFFTALGHDPEVFQAQYPDRFDEIFRSYPQVLNKLTHQDV) are cytoplasmic.

Belongs to the CTL (choline transporter-like) family.

It is found in the cell membrane. In terms of biological role, probably involved in transport through the plasma membrane. The chain is Protein PNS1 (PNS1) from Candida glabrata (strain ATCC 2001 / BCRC 20586 / JCM 3761 / NBRC 0622 / NRRL Y-65 / CBS 138) (Yeast).